We begin with the raw amino-acid sequence, 775 residues long: GRIP and coiled-coil domain-containing protein 1 (775 aa).

Residues 13-61 (SKKDLLETIETQKKQLLQYQARLKDVVRAYKSLLKEKEALEASIKVLSV) are a coiled coil. Over residues 84-93 (DDRCSTHSED) the composition is skewed to basic and acidic residues. Disordered regions lie at residues 84 to 153 (DDRC…AGGE) and 614 to 639 (GLPG…SDSL). Composition is skewed to low complexity over residues 94–110 (STGT…LTST), 133–147 (ASWS…SGDG), and 629–638 (DPADTSSSDS). Residues 153–763 (EVDKRLHQLK…PEEKQVIMRL (611 aa)) are a coiled coil. Residues 713–763 (QSREGANLEYLKNIIYRFLTLPDSLGRQQTLTAILTILHFSPEEKQVIMRL) enclose the GRIP domain.

It is found in the cytoplasm. The protein resides in the golgi apparatus membrane. Functionally, probably involved in maintaining Golgi structure. In Homo sapiens (Human), this protein is GRIP and coiled-coil domain-containing protein 1 (GCC1).